We begin with the raw amino-acid sequence, 64 residues long: DNA-binding protein 7b (64 aa).

N6-methyllysine is present on residues lysine 5 and lysine 7.

This sequence belongs to the 7 kDa DNA-binding/endoribonuclease P2 family. In terms of assembly, monomer. Post-translationally, lys-5 and Lys-7 may be methylated.

The protein resides in the cytoplasm. Functionally, can constrain negative DNA supercoils. May be involved in maintaining the integrity of the genome at high temperature. The sequence is that of DNA-binding protein 7b from Saccharolobus shibatae (strain ATCC 51178 / DSM 5389 / JCM 8931 / NBRC 15437 / B12) (Sulfolobus shibatae).